A 1181-amino-acid polypeptide reads, in one-letter code: MGPERTGAAPLPLLLVLALSQGILNCCLAYNVGLPEAKIFSGPSSEQFGYAVQQFINPKGNWLLVGSPWSGFPENRMGDVYKCPVDLSTATCEKLNLQTSTSIPNVTEMKTNMSLGLILTRNMGTGGFLTCGPLWAQQCGNQYYTTGVCSDISPDFQLSASFSPATQPCPSLIDVVVVCDESNSIYPWDAVKNFLEKFVQGLDIGPTKTQVGLIQYANNPRVVFNLNTYKTKEEMIVATSQTSQYGGDLTNTFGAIQYARKYAYSAASGGRRSATKVMVVVTDGESHDGSMLKAVIDQCNHDNILRFGIAVLGYLNRNALDTKNLIKEIKAIASIPTERYFFNVSDEAALLEKAGTLGEQIFSIEGTVQGGDNFQMEMSQVGFSADYSSQNDILMLGAVGAFGWSGTIVQKTSHGHLIFPKQAFDQILQDRNHSSYLGYSVAAISTGESTHFVAGAPRANYTGQIVLYSVNENGNITVIQAHRGDQIGSYFGSVLCSVDVDKDTITDVLLVGAPMYMSDLKKEEGRVYLFTIKEGILGQHQFLEGPEGIENTRFGSAIAALSDINMDGFNDVIVGSPLENQNSGAVYIYNGHQGTIRTKYSQKILGSDGAFRSHLQYFGRSLDGYGDLNGDSITDVSIGAFGQVVQLWSQSIADVAIEASFTPEKITLVNKNAQIILKLCFSAKFRPTKQNNQVAIVYNITLDADGFSSRVTSRGLFKENNERCLQKNMVVNQAQSCPEHIIYIQEPSDVVNSLDLRVDISLENPGTSPALEAYSETAKVFSIPFHKDCGEDGLCISDLVLDVRQIPAAQEQPFIVSNQNKRLTFSVTLKNKRESAYNTGIVVDFSENLFFASFSLPVDGTEVTCQVAASQKSVACDVGYPALKREQQVTFTINFDFNLQNLQNQASLSFQALSESQEENKADNLVNLKIPLLYDAEIHLTRSTNINFYEISSDGNVPSIVHSFEDVGPKFIFSLKVTTGSVPVSMATVIIHIPQYTKEKNPLMYLTGVQTDKAGDISCNADINPLKIGQTSSSVSFKSENFRHTKELNCRTASCSNVTCWLKDVHMKGEYFVNVTTRIWNGTFASSTFQTVQLTAAAEINTYNPEIYVIEDNTVTIPLMIMKPDEKAEVPTGVIIGSIIAGILLLLALVAILWKLGFFKRKYEKMTKNPDEIDETTELSS.

The signal sequence occupies residues 1–29 (MGPERTGAAPLPLLLVLALSQGILNCCLA). Topologically, residues 30-1132 (YNVGLPEAKI…KPDEKAEVPT (1103 aa)) are extracellular. FG-GAP repeat units lie at residues 34 to 92 (LPEA…TATC) and 101 to 161 (TSIP…LSAS). An intrachain disulfide couples cysteine 83 to cysteine 92. Residues asparagine 105, asparagine 112, and asparagine 343 are each glycosylated (N-linked (GlcNAc...) asparagine). Residues 188 to 365 (WDAVKNFLEK…TLGEQIFSIE (178 aa)) enclose the VWFA domain. 5 FG-GAP repeats span residues 366–420 (GTVQ…LIFP), 423–475 (AFDQ…ENGN), 477–539 (TVIQ…ILGQ), 540–598 (HQFL…TIRT), and 602–664 (QKIL…FTPE). N-linked (GlcNAc...) asparagine glycans are attached at residues asparagine 432, asparagine 460, and asparagine 475. Residues aspartate 499, aspartate 501, aspartate 503, aspartate 507, aspartate 563, asparagine 565, aspartate 567, aspartate 571, aspartate 627, asparagine 629, aspartate 631, and aspartate 635 each coordinate Ca(2+). 5 disulfide bridges follow: cysteine 680–cysteine 737, cysteine 789–cysteine 795, cysteine 865–cysteine 876, cysteine 1019–cysteine 1050, and cysteine 1055–cysteine 1060. Residue asparagine 699 is glycosylated (N-linked (GlcNAc...) asparagine). N-linked (GlcNAc...) asparagine glycosylation is found at asparagine 1057, asparagine 1074, and asparagine 1081. Residues 1133-1154 (GVIIGSIIAGILLLLALVAILW) form a helical membrane-spanning segment. An interaction with HPS5 region spans residues 1155 to 1161 (KLGFFKR). At 1155-1181 (KLGFFKRKYEKMTKNPDEIDETTELSS) the chain is on the cytoplasmic side. The GFFKR motif signature appears at 1157–1161 (GFFKR).

The protein belongs to the integrin alpha chain family. As to quaternary structure, heterodimer of an alpha and a beta subunit. Alpha-2 associates with beta-1. Interacts with HPS5 and RAB21. In terms of assembly, (Microbial infection) Integrin ITGA2:ITGB1 interacts (via ITAG2 I-domain) with rotavirus A VP4 protein. (Microbial infection) Integrin ITGA2:ITGB1 interacts with human echoviruses 1 and 8 capsid proteins.

The protein localises to the membrane. Functionally, integrin alpha-2/beta-1 is a receptor for laminin, collagen, collagen C-propeptides, fibronectin and E-cadherin. It recognizes the proline-hydroxylated sequence G-F-P-G-E-R in collagen. It is responsible for adhesion of platelets and other cells to collagens, modulation of collagen and collagenase gene expression, force generation and organization of newly synthesized extracellular matrix. (Microbial infection) Integrin ITGA2:ITGB1 acts as a receptor for Human rotavirus A. In terms of biological role, (Microbial infection) Integrin ITGA2:ITGB1 acts as a receptor for Human echoviruses 1 and 8. The polypeptide is Integrin alpha-2 (ITGA2) (Homo sapiens (Human)).